The primary structure comprises 1125 residues: Telomerase reverse transcriptase (1125 aa).

The tract at residues 1–239 is RNA-interacting domain 1; it reads MPRAPRCPAV…TKRLLSLTST (239 aa). The GQ motif stretch occupies residues 58–205; it reads VPWGSQPPPA…RPVGGNFTNL (148 aa). Positions 137-141 are required for regulating specificity for telomeric DNA and for processivity for primer elongation; that stretch reads WMLLL. Residues 206–216 are compositionally biased toward polar residues; sequence GSAHQIKNSGH. The segment at 206–304 is disordered; it reads GSAHQIKNSG…ASDPSLSGSV (99 aa). The linker stretch occupies residues 240 to 328; that stretch reads NVPSAKKARF…PPQDAEKLRP (89 aa). Over residues 247–259 the composition is skewed to basic and acidic residues; the sequence is ARFEPALRVDKGP. The span at 273–287 shows a compositional bias: low complexity; it reads APSPAASPKVPPAAK. The tract at residues 306 to 528 is required for oligomerization; it reads CKHKPSSSSL…VPAAEHRLRE (223 aa). The RNA-interacting domain 2 stretch occupies residues 329 to 540; the sequence is FTETRHFLYS…LAMFLFWLMD (212 aa). The TFLY; involved in RNA binding signature appears at 332–337; sequence TRHFLY. Residues 381–511 are QFP motif; sequence FCRTRRLPRR…VKVEDCHWLR (131 aa). The CP motif stretch occupies residues 402-422; it reads LMNHAKCQYVRFLRSHCRFRT. The residue at position 447 (serine 447) is a Phosphoserine; by DYRK2. The Reverse transcriptase domain maps to 595 to 928; sequence EVKHHQDTWL…CLFPWCGLLL (334 aa). Tyrosine 697 bears the Phosphotyrosine; by SRC-type Tyr-kinases mark. Mg(2+) is bound by residues aspartate 702, aspartate 861, and aspartate 862. The segment at 907 to 921 is required for oligomerization; sequence LGGAAPHQLPAHCLF. The tract at residues 923–927 is primer grip sequence; that stretch reads WCGLL. Residues 929–1125 are CTE; sequence DTRTLEVFCD…LSTDFQTILD (197 aa).

Belongs to the reverse transcriptase family. Telomerase subfamily. Catalytic component of the telomerase holoenzyme complex composed of one molecule of TERT, one molecule of WRAP53/TCAB1, two molecules of H/ACA ribonucleoprotein complex subunits DKC1, NOP10, NHP2 and GAR1, and a telomerase RNA template component (TERC). The telomerase holoenzyme complex is associated with TEP1, SMG6/EST1A and POT1. The molecular chaperone HSP90/P23 complex is required for correct assembly and stabilization of the active telomerase. Interacts directly with HSP90A and PTGES3. Interacts with HSPA1A; the interaction occurs in the absence of TERC and dissociates once the complex has formed. Interacts with RAN; the interaction promotes nuclear export of TERT. Interacts with XPO1. Interacts with PTPN11; the interaction retains TERT in the nucleus. Interacts with NCL (via RRM1 and C-terminal RRM4/Arg/Gly-rich domains); the interaction is important for nucleolar localization of TERT. Interacts with SMARCA4 (via the bromodomain); the interaction regulates Wnt-mediated signaling. Interacts with MCRS1 (isoform MCRS2); the interaction inhibits in vitro telomerase activity. Interacts with PIF1; the interaction has no effect on the elongation activity of TERT. Interacts with PML; the interaction recruits TERT to PML bodies and inhibits telomerase activity. Interacts with GNL3L. Interacts with isoform 1 and isoform 2 of NVL. Interacts with DHX36. Interacts with ATF7. In terms of processing, phosphorylation at Tyr-697 under oxidative stress leads to translocation of TERT to the cytoplasm and reduces its antiapoptotic activity. Dephosphorylated by SHP2/PTPN11 leading to nuclear retention. Phosphorylation at the G2/M phase at Ser-447 by DYRK2 promotes ubiquitination by the EDVP complex and degradation. Ubiquitinated by the EDVP complex, a E3 ligase complex following phosphorylation at Ser-447 by DYRK2. Ubiquitinated leads to proteasomal degradation. In terms of tissue distribution, isoform 1 and isoform 2 expressed in thymus, liver, spleen, lung, kidney and testis. High level of inactive isoform 3 in adult hippocampus, low level in heart, cortex and cerebellum.

It localises to the nucleus. It is found in the nucleolus. The protein localises to the nucleoplasm. The protein resides in the chromosome. Its subcellular location is the telomere. It localises to the cytoplasm. It is found in the PML body. The catalysed reaction is DNA(n) + a 2'-deoxyribonucleoside 5'-triphosphate = DNA(n+1) + diphosphate. Its function is as follows. Telomerase is a ribonucleoprotein enzyme essential for the replication of chromosome termini in most eukaryotes. Active in progenitor and cancer cells. Inactive, or very low activity, in normal somatic cells. Catalytic component of the teleromerase holoenzyme complex whose main activity is the elongation of telomeres by acting as a reverse transcriptase that adds simple sequence repeats to chromosome ends by copying a template sequence within the RNA component of the enzyme. Catalyzes the RNA-dependent extension of 3'-chromosomal termini with the 6-nucleotide telomeric repeat unit, 5'-TTAGGG-3'. The catalytic cycle involves primer binding, primer extension and release of product once the template boundary has been reached or nascent product translocation followed by further extension. More active on substrates containing 2 or 3 telomeric repeats. Telomerase activity is regulated by a number of factors including telomerase complex-associated proteins, chaperones and polypeptide modifiers. Modulates Wnt signaling. Plays important roles in aging and antiapoptosis. The sequence is that of Telomerase reverse transcriptase from Rattus norvegicus (Rat).